A 206-amino-acid polypeptide reads, in one-letter code: dITP/XTP pyrophosphatase (206 aa).

10-15 (SGNAGK) is a binding site for substrate. Mg(2+)-binding residues include E40 and D69. D69 (proton acceptor) is an active-site residue. Substrate is bound by residues S70, 148–151 (FGYD), K171, and 176–177 (HR).

Belongs to the HAM1 NTPase family. As to quaternary structure, homodimer. Mg(2+) is required as a cofactor.

It carries out the reaction XTP + H2O = XMP + diphosphate + H(+). The enzyme catalyses dITP + H2O = dIMP + diphosphate + H(+). The catalysed reaction is ITP + H2O = IMP + diphosphate + H(+). In terms of biological role, pyrophosphatase that catalyzes the hydrolysis of nucleoside triphosphates to their monophosphate derivatives, with a high preference for the non-canonical purine nucleotides XTP (xanthosine triphosphate), dITP (deoxyinosine triphosphate) and ITP. Seems to function as a house-cleaning enzyme that removes non-canonical purine nucleotides from the nucleotide pool, thus preventing their incorporation into DNA/RNA and avoiding chromosomal lesions. In Synechococcus sp. (strain CC9311), this protein is dITP/XTP pyrophosphatase.